Here is a 478-residue protein sequence, read N- to C-terminus: uncharacterized protein (478 aa).

Positions M1–A19 are cleaved as a signal peptide. Residues S20–Q214 lie on the Lumenal side of the membrane. The chain crosses the membrane as a helical span at residues I215–I235. Over C236–K240 the chain is Cytoplasmic. Residues L241–V261 traverse the membrane as a helical segment. The Lumenal portion of the chain corresponds to K262–D289. Residues G290–I310 form a helical membrane-spanning segment. The Cytoplasmic portion of the chain corresponds to R311 to M317. A helical transmembrane segment spans residues V318–V338. The Lumenal segment spans residues Y339–V356. A helical transmembrane segment spans residues W357–F377. Over R378 to W391 the chain is Cytoplasmic. A helical transmembrane segment spans residues N392 to F412. Over D413–E427 the chain is Lumenal. Residues Y428–Y448 traverse the membrane as a helical segment. At S449–F478 the chain is on the cytoplasmic side.

The protein localises to the endoplasmic reticulum membrane. The protein resides in the golgi apparatus membrane. This is an uncharacterized protein from Schizosaccharomyces pombe (strain 972 / ATCC 24843) (Fission yeast).